A 210-amino-acid chain; its full sequence is Large ribosomal subunit protein uL4 (210 aa).

Residues 41 to 52 (QTNARQGTASTK) show a composition bias toward polar residues. The disordered stretch occupies residues 41–71 (QTNARQGTASTKTRAEVRGGGRKPWRQKGTG). The span at 60 to 71 (GGRKPWRQKGTG) shows a compositional bias: basic residues.

Belongs to the universal ribosomal protein uL4 family. As to quaternary structure, part of the 50S ribosomal subunit.

In terms of biological role, one of the primary rRNA binding proteins, this protein initially binds near the 5'-end of the 23S rRNA. It is important during the early stages of 50S assembly. It makes multiple contacts with different domains of the 23S rRNA in the assembled 50S subunit and ribosome. Forms part of the polypeptide exit tunnel. This chain is Large ribosomal subunit protein uL4, found in Nostoc sp. (strain PCC 7120 / SAG 25.82 / UTEX 2576).